The primary structure comprises 731 residues: MVVDPYQKREAKRYKNPIPSREYISSCLRTSQDLISQKNLEKKFGINNQESKKALRRRLRAMERDGQVIYTSNRCYVAPESLKIVKGKVIGHRDGYGFLRTETLKEDLWLSSEQMKSCIHGDIILAHIVETHGKRRSSARFLKLLQPNNILIVGRYYIDDKIKFVIPDDTRFNFKIFIFSAIKDDISIGSIVSVKLKQHPIRNSRVQGFIVEILGKEMGTNLAIEIALRTHLIPSLWSKEVKKQVYEISRKINQYDFKNRTDLRHFPFFTIDDEDARDFDDAVFCKRKANPEEGWILWVAIADVSCYVQPNTPLDKAALERGTSVYFPSLVIPMLPEKISTDLCSLKPNVERLCLICEMSLSKQGELISYKHYEGIICSHGRFTYNEIFKIWNGDIFLRSKYKKFLKDIENLSCLQNIFNKDNISKKGIYFENIEPKFVLDSNLRIKSIYQNIRNDAHKFIESCMILANVASARFVEKYKYPVLFRNHDRPKKDNVVSLRLFLNELGFTLLGGDSPESVHYSNLLKNVSDRPEYEMIQTVLLRSMTQAVYSPDNRGHFGLSLSSYVHFTSPIRRYPDLILHRVIKYLLFKDKNTSKSNYNFYSAHLYSTGEIKKIGAHCSITERRADEANRDVIDWLKCDFMYKKIGCILNGVISNVTTFGFFVRLNQFFIDGLVHINSLNDDYYYFDSLGLKLIGKSTKNTYCLGDALKVKVISVNLNEKKIELSLYKSS.

The RNB domain maps to 260–589 (RTDLRHFPFF…LHRVIKYLLF (330 aa)). An S1 motif domain is found at 647 to 728 (GCILNGVISN…NEKKIELSLY (82 aa)).

Belongs to the RNR ribonuclease family. RNase R subfamily. Monomer.

It is found in the cytoplasm. It catalyses the reaction Exonucleolytic cleavage in the 3'- to 5'-direction to yield nucleoside 5'-phosphates.. 3'-5' exoribonuclease that releases 5'-nucleoside monophosphates and is involved in maturation of structured RNAs. In Buchnera aphidicola subsp. Acyrthosiphon pisum (strain APS) (Acyrthosiphon pisum symbiotic bacterium), this protein is Ribonuclease R.